The chain runs to 381 residues: Bifunctional enzyme Fae/Hps (381 aa).

The tract at residues 1 to 150 (MIKFGEAVLG…KEKYRALHPL (150 aa)) is formaldehyde-activating enzyme. Residues 151–381 (VGFRDVRLEY…DEDEDIGEEL (231 aa)) are 3-hexulose-6-phosphate synthase.

In the N-terminal section; belongs to the formaldehyde-activating enzyme family. This sequence in the C-terminal section; belongs to the HPS/KGPDC family. HPS subfamily.

The catalysed reaction is 5,6,7,8-tetrahydromethanopterin + formaldehyde = 5,10-methylenetetrahydromethanopterin + H2O. It carries out the reaction D-ribulose 5-phosphate + formaldehyde = D-arabino-hex-3-ulose 6-phosphate. It participates in carbohydrate biosynthesis; D-ribose 5-phosphate biosynthesis. In terms of biological role, catalyzes the condensation of formaldehyde with tetrahydromethanopterin (H(4)MPT) to 5,10-methylenetetrahydromethanopterin. Its function is as follows. Catalyzes the reversible formation of ribulose-5-phosphate and formaldehyde from 3-hexulose-6-phosphate. In Methanocaldococcus jannaschii (strain ATCC 43067 / DSM 2661 / JAL-1 / JCM 10045 / NBRC 100440) (Methanococcus jannaschii), this protein is Bifunctional enzyme Fae/Hps.